The following is a 699-amino-acid chain: D-(-)-3-hydroxybutyrate oligomer hydrolase (699 aa).

Positions 1–33 (MTAIRGGSRRAPGLALALLGGVLLGACHGDENA) are cleaved as a signal peptide. Ser-311 functions as the Charge relay system in the catalytic mechanism.

The protein belongs to the D-(-)-3-hydroxybutyrate oligomer hydrolase family.

It localises to the secreted. It catalyses the reaction (3R)-hydroxybutanoate dimer + H2O = 2 (R)-3-hydroxybutanoate + H(+). It functions in the pathway lipid metabolism; butanoate metabolism. In terms of biological role, participates in the degradation of poly-3-hydroxybutyrate (PHB). It works downstream of poly(3-hydroxybutyrate) depolymerase, hydrolyzing D(-)-3-hydroxybutyrate oligomers of various length (3HB-oligomers) into 3HB-monomers. The sequence is that of D-(-)-3-hydroxybutyrate oligomer hydrolase from Burkholderia pseudomallei (strain 1106a).